We begin with the raw amino-acid sequence, 89 residues long: Small ribosomal subunit protein uS15 (89 aa).

Belongs to the universal ribosomal protein uS15 family. In terms of assembly, part of the 30S ribosomal subunit. Forms a bridge to the 50S subunit in the 70S ribosome, contacting the 23S rRNA.

One of the primary rRNA binding proteins, it binds directly to 16S rRNA where it helps nucleate assembly of the platform of the 30S subunit by binding and bridging several RNA helices of the 16S rRNA. In terms of biological role, forms an intersubunit bridge (bridge B4) with the 23S rRNA of the 50S subunit in the ribosome. The chain is Small ribosomal subunit protein uS15 from Blochmanniella pennsylvanica (strain BPEN).